The primary structure comprises 228 residues: Cytidylate kinase (228 aa).

Gly10–Thr18 provides a ligand contact to ATP.

This sequence belongs to the cytidylate kinase family. Type 1 subfamily.

The protein resides in the cytoplasm. It carries out the reaction CMP + ATP = CDP + ADP. It catalyses the reaction dCMP + ATP = dCDP + ADP. This is Cytidylate kinase from Acinetobacter baumannii (strain ACICU).